Consider the following 199-residue polypeptide: Heparin-binding hemagglutinin (199 aa).

Residues 162–180 (KAAPAKKAAPAKKAAPAKK) are compositionally biased toward low complexity. Positions 162–199 (KAAPAKKAAPAKKAAPAKKAAAKKAPAKKAAAKKVTQK) are disordered. Basic residues predominate over residues 181-199 (AAAKKAPAKKAAAKKVTQK).

It to M.leprae HbhA. In terms of processing, glycosylated. Glycosylation may protect the protein from proteolytic degradation and be important for hemagglutination. It suggests that the carbohydrate moiety may be located within the C-terminal domain of HbhA.

The protein resides in the cell surface. Functionally, required for extrapulmonary dissemination. Mediates adherence to epithelial cells by binding to sulfated glycoconjugates present at the surface of these cells. The polypeptide is Heparin-binding hemagglutinin (hbhA) (Mycobacterium tuberculosis (strain CDC 1551 / Oshkosh)).